A 240-amino-acid polypeptide reads, in one-letter code: 1-(5-phosphoribosyl)-5-[(5-phosphoribosylamino)methylideneamino] imidazole-4-carboxamide isomerase (240 aa).

The active-site Proton acceptor is Asp10. The active-site Proton donor is Asp131.

This sequence belongs to the HisA/HisF family.

The protein resides in the cytoplasm. The catalysed reaction is 1-(5-phospho-beta-D-ribosyl)-5-[(5-phospho-beta-D-ribosylamino)methylideneamino]imidazole-4-carboxamide = 5-[(5-phospho-1-deoxy-D-ribulos-1-ylimino)methylamino]-1-(5-phospho-beta-D-ribosyl)imidazole-4-carboxamide. The protein operates within amino-acid biosynthesis; L-histidine biosynthesis; L-histidine from 5-phospho-alpha-D-ribose 1-diphosphate: step 4/9. The sequence is that of 1-(5-phosphoribosyl)-5-[(5-phosphoribosylamino)methylideneamino] imidazole-4-carboxamide isomerase from Shouchella clausii (strain KSM-K16) (Alkalihalobacillus clausii).